A 453-amino-acid polypeptide reads, in one-letter code: Trigger factor (453 aa).

The PPIase FKBP-type domain occupies 171–256; that stretch reads GDRITISFKG…VSLIEAPEEL (86 aa).

Belongs to the FKBP-type PPIase family. Tig subfamily.

The protein localises to the cytoplasm. It catalyses the reaction [protein]-peptidylproline (omega=180) = [protein]-peptidylproline (omega=0). Involved in protein export. Acts as a chaperone by maintaining the newly synthesized protein in an open conformation. Functions as a peptidyl-prolyl cis-trans isomerase. The sequence is that of Trigger factor from Nitrobacter winogradskyi (strain ATCC 25391 / DSM 10237 / CIP 104748 / NCIMB 11846 / Nb-255).